The primary structure comprises 514 residues: Major facilitator superfamily domain-containing protein 4A (514 aa).

Transmembrane regions (helical) follow at residues 19–39 (LTYW…GPTL), 53–73 (ISWV…LGGV), 82–102 (LWAL…IPFC), 107–127 (VLAL…TVAN), and 139–159 (AVFL…SPLI). N-linked (GlcNAc...) asparagine glycans are attached at residues Asn-177 and Asn-203. A run of 7 helical transmembrane segments spans residues 221-241 (YAFW…LMLL), 307-327 (FFAI…LTGA), 347-367 (VAGY…LLSI), 376-396 (ATMV…LLIF), 400-420 (VVFL…TFPS), 438-458 (VLVT…GSIF), and 466-486 (FLVC…LLLF).

It belongs to the major facilitator superfamily.

It is found in the membrane. This is Major facilitator superfamily domain-containing protein 4A (MFSD4A) from Pongo abelii (Sumatran orangutan).